A 331-amino-acid chain; its full sequence is MAVNLKGRSFLTLKDFTPAEIRYLLDLSHDLKAKKRAGILGDSLKGKNVVLLFEKTSTRTRCAFECGAAEEGAHVTFLTNSQMGKKESIEDTAKVLGRMYDGIEFRGFKQSTVEELAKHAGVPVWNGLTDADHPTQILADFLTIEEHAHKPLSEIKLVFTGDTRNNMSYALMYGAAKMGMHFVALGPDSLKPDEDILKEMQEYSKETGATIEFSSNVDEAVKGADVIYTDIWVSMGEDESLYPERVKLLTPYKVTREMMNKTGNKNTLFMHCLPSFHDEDTEVCKDMMDRLGLDIREVEDEVFRSKNSVVFDEAENRMHTIKAVMVATAGK.

Carbamoyl phosphate-binding positions include 57–60 (STRT), glutamine 82, arginine 106, and 133–136 (HPTQ). Residues asparagine 166, aspartate 230, and 234 to 235 (SM) each bind L-ornithine. Residues 272-273 (CL) and arginine 317 each bind carbamoyl phosphate.

The protein belongs to the aspartate/ornithine carbamoyltransferase superfamily. OTCase family.

The protein resides in the cytoplasm. The catalysed reaction is carbamoyl phosphate + L-ornithine = L-citrulline + phosphate + H(+). It functions in the pathway amino-acid degradation; L-arginine degradation via ADI pathway; carbamoyl phosphate from L-arginine: step 2/2. Reversibly catalyzes the transfer of the carbamoyl group from carbamoyl phosphate (CP) to the N(epsilon) atom of ornithine (ORN) to produce L-citrulline. The polypeptide is Ornithine carbamoyltransferase (Clostridium perfringens (strain SM101 / Type A)).